The following is a 633-amino-acid chain: Pentatricopeptide repeat-containing protein At1g43980, mitochondrial (633 aa).

The N-terminal 30 residues, 1-30 (MFQLLRRAHGLCMPSSLYFSRLVNRSLLSK), are a transit peptide targeting the mitochondrion. PPR repeat units lie at residues 50 to 80 (TTYW…IPDK), 81 to 111 (NTIT…MPER), 112 to 146 (DVVS…EIRP), 147 to 178 (TEFT…GVSR), 180 to 210 (NLVV…MEDR), 211 to 245 (DVVS…EIQP), 246 to 280 (DEYT…GFLS), 281 to 311 (NSIV…LEKW), 312 to 346 (DSVL…SVRP), 347 to 380 (DKFT…GFDL), 381 to 411 (DTAV…TDGK), 412 to 447 (DLIF…SLKP), 448 to 483 (DRVT…GVNP), and 484 to 514 (GNEH…IPFE). The segment at 519-594 (IWEPILCASL…AQGSSKISIE (76 aa)) is type E motif.

It belongs to the PPR family. PCMP-E subfamily.

The protein localises to the mitochondrion. The sequence is that of Pentatricopeptide repeat-containing protein At1g43980, mitochondrial (PCMP-E58) from Arabidopsis thaliana (Mouse-ear cress).